We begin with the raw amino-acid sequence, 318 residues long: Taste receptor type 2 member 7 (318 aa).

Over 1 to 9 (MTDKVQTTL) the chain is Extracellular. The chain crosses the membrane as a helical span at residues 10–30 (LFLAIGEFSVGILGNAFIGLV). Topologically, residues 31–55 (NCMDWVKKRKIASIDLILTSLAISR) are cytoplasmic. Residues 56–76 (ICLLCVILLDCFMLVLYPDVY) form a helical membrane-spanning segment. Residues 77 to 94 (ATGKQMRIIDFFWTLTNH) are Extracellular-facing. A helical transmembrane segment spans residues 95 to 115 (LSIWFATCLSIYYFFKIANFF). At 116–128 (HPLFLWMKWRIDR) the chain is on the cytoplasmic side. A helical transmembrane segment spans residues 129 to 149 (VISWILLGCMVLSVFINLPAT). Topologically, residues 150–187 (ENLNADFRRCVKAKRKTNLTWSCRVTKAQHASTKLFLN) are extracellular. Residue N167 is glycosylated (N-linked (GlcNAc...) asparagine). Residues 188-208 (LVTLLPFSVCLMSFFLLILSL) traverse the membrane as a helical segment. The Cytoplasmic segment spans residues 209-235 (WRHIRRMQLSATGCRDPSTEAHVRALK). The helical transmembrane segment at 236–256 (AVISFLLLFIAYYLSFLIATS) threads the bilayer. Residues 257 to 266 (SYFIPETELA) lie on the Extracellular side of the membrane. Residues 267–287 (VIFGEFIALIYPSSHSFILIL) traverse the membrane as a helical segment. Topologically, residues 288 to 318 (GNSKLRRASLKVLWTVMSILKGRKFQQHKQI) are cytoplasmic.

The protein belongs to the G-protein coupled receptor T2R family.

Its subcellular location is the membrane. Its function is as follows. Gustducin-coupled receptor implicated in the perception of bitter compounds in the oral cavity and the gastrointestinal tract. Signals through PLCB2 and the calcium-regulated cation channel TRPM5. The sequence is that of Taste receptor type 2 member 7 (TAS2R7) from Macaca mulatta (Rhesus macaque).